The primary structure comprises 256 residues: Uridylate kinase (256 aa).

ATP is bound at residue 10 to 13 (KLSG). Residue Gly52 coordinates UMP. Residues Gly53 and Arg57 each coordinate ATP. UMP is bound by residues Asp72 and 134–141 (NGQPFLTT). Residues Tyr168 and Asp171 each coordinate ATP.

It belongs to the UMP kinase family. As to quaternary structure, homohexamer.

The protein localises to the cytoplasm. The enzyme catalyses UMP + ATP = UDP + ADP. It participates in pyrimidine metabolism; CTP biosynthesis via de novo pathway; UDP from UMP (UMPK route): step 1/1. Inhibited by UTP. In terms of biological role, catalyzes the reversible phosphorylation of UMP to UDP. This is Uridylate kinase from Frankia alni (strain DSM 45986 / CECT 9034 / ACN14a).